Here is a 178-residue protein sequence, read N- to C-terminus: Bryoporin (178 aa).

S51, V83, S102, P104, and Y134 together coordinate phosphocholine. A trp-rich region region spans residues 101-117; the sequence is WSVPFDYNLYSNWWNIA.

It belongs to the actinoporin family. Plant subfamily.

Inhibited by sphingomyelin. Functionally, actinoporin-related protein having hemolytic activity in vitro. Binds probably a phosphocholine derivative with the unique amido or hydroxyl groups found in sphingomyelin. Involved in drought tolerance. The protein is Bryoporin of Physcomitrium patens (Spreading-leaved earth moss).